The sequence spans 106 residues: HIG1 domain family member 2A (106 aa).

Position 2 is an N-acetylalanine (Ala2). Residues 20–106 (VIEGFSPTVY…LAASAMKSQA (87 aa)) enclose the HIG1 domain. 2 helical membrane-spanning segments follow: residues 47–67 (PMVP…LYCF) and 83–103 (IAAQ…SAMK).

Associates with cytochrome c oxidase (COX, complex IV); proposed complex component.

It localises to the mitochondrion membrane. The protein localises to the mitochondrion inner membrane. In terms of biological role, proposed subunit of cytochrome c oxidase (COX, complex IV), which is the terminal component of the mitochondrial respiratory chain that catalyzes the reduction of oxygen to water. May be involved in cytochrome c oxidase activity. May play a role in the assembly of respiratory supercomplexes. In Mus musculus (Mouse), this protein is HIG1 domain family member 2A (Higd2a).